Reading from the N-terminus, the 77-residue chain is uncharacterized protein (77 aa).

This is an uncharacterized protein from Acidianus ambivalens (Desulfurolobus ambivalens).